The following is a 383-amino-acid chain: Non-structural maintenance of chromosomes element 4 homolog B (383 aa).

The segment covering 1 to 22 (MRNSVKWETELTGDRSRRREAD) has biased composition (basic and acidic residues). Disordered stretches follow at residues 1 to 59 (MRNS…EQGI), 198 to 231 (MKQRKSRVGNRKRTKPGAGVKPEEVDDTEAEKKS), and 355 to 383 (QGSVIQEETVVEDSSNMEGDNEDSKNGGL). Over residues 201 to 212 (RKSRVGNRKRTK) the composition is skewed to basic residues. Residues 355 to 372 (QGSVIQEETVVEDSSNME) are compositionally biased toward polar residues.

It belongs to the NSE4 family. As to quaternary structure, interacts with SMC5, SMC6A or SMC6B. The SMC5-SMC6 complex is composed of the SMC5 and SMC6 heterodimer attached via their hinge domain and from the non-SMC subunit NSE4A or NSE4B. Not expressed in seedlings, rosette leaves and floral buds.

Its subcellular location is the nucleus. In terms of biological role, component of the SMC5-SMC6 complex, that promotes sister chromatid alignment after DNA damage and facilitates double-stranded DNA breaks (DSBs) repair via homologous recombination between sister chromatids. This Arabidopsis thaliana (Mouse-ear cress) protein is Non-structural maintenance of chromosomes element 4 homolog B (NSE4B).